We begin with the raw amino-acid sequence, 744 residues long: Catalase-peroxidase (744 aa).

Positions 108–231 (WHSAGTYRIS…LAAVQMGLIY (124 aa)) form a cross-link, tryptophyl-tyrosyl-methioninium (Trp-Tyr) (with M-257). His109 (proton acceptor) is an active-site residue. A cross-link (tryptophyl-tyrosyl-methioninium (Tyr-Met) (with W-108)) is located at residues 231–257 (YVNPEGPNGNPDPIAAARDIRETFRRM). His272 provides a ligand contact to heme b. The segment at 353-372 (ANQWKPKDGAGAGTVPDAHD) is disordered.

This sequence belongs to the peroxidase family. Peroxidase/catalase subfamily. Homodimer or homotetramer. It depends on heme b as a cofactor. Formation of the three residue Trp-Tyr-Met cross-link is important for the catalase, but not the peroxidase activity of the enzyme.

It catalyses the reaction H2O2 + AH2 = A + 2 H2O. The enzyme catalyses 2 H2O2 = O2 + 2 H2O. In terms of biological role, bifunctional enzyme with both catalase and broad-spectrum peroxidase activity. This Frankia casuarinae (strain DSM 45818 / CECT 9043 / HFP020203 / CcI3) protein is Catalase-peroxidase.